Consider the following 280-residue polypeptide: Lysosome-associated membrane glycoprotein 5 (280 aa).

The signal sequence occupies residues 1–29 (MDLRVRTLLGGDRLRILLMFFHVMVQTVA). Residues 30 to 235 (EQEVENLSGL…PVDEQEQLEE (206 aa)) are Extracellular-facing. Residues Asn35, Asn53, Asn102, and Asn127 are each glycosylated (N-linked (GlcNAc...) asparagine). Residues 236–256 (TLPLILGLILGLVIVITLVIY) form a helical membrane-spanning segment. Residues 257–280 (HIHHKMTANQVQIPRDRSQYKHMG) lie on the Cytoplasmic side of the membrane.

The protein belongs to the LAMP family. In terms of processing, glycosylated. As to expression, in brain, strongly expressed in the globus pallidus/ventral pallidum complex, the substantia nigra pars reticulata and the entopeduncular nucleus (at protein level). Expressed in the external plexiform layer of the olfactory bulb (at protein level). May be weakly expressed in neocortex and striatum (at protein level). Highly expressed in brain; not detected in other tissues tested. Detected in the cingulate cortex, cortical plate and caudate putamen. In neocortex, specifically expressed in neurons of layers II/III and V.

The protein localises to the cytoplasmic vesicle membrane. It localises to the cell membrane. It is found in the cell projection. The protein resides in the dendrite. Its subcellular location is the cytoplasmic vesicle. The protein localises to the secretory vesicle. It localises to the synaptic vesicle membrane. It is found in the growth cone membrane. The protein resides in the early endosome membrane. Its subcellular location is the recycling endosome. The protein localises to the endoplasmic reticulum-Golgi intermediate compartment membrane. It localises to the endosome membrane. In terms of biological role, plays a role in short-term synaptic plasticity in a subset of GABAergic neurons in the brain. The polypeptide is Lysosome-associated membrane glycoprotein 5 (Lamp5) (Mus musculus (Mouse)).